We begin with the raw amino-acid sequence, 505 residues long: Lysine--tRNA ligase (505 aa).

Residues glutamate 415 and glutamate 422 each contribute to the Mg(2+) site.

This sequence belongs to the class-II aminoacyl-tRNA synthetase family. In terms of assembly, homodimer. Requires Mg(2+) as cofactor.

It is found in the cytoplasm. It catalyses the reaction tRNA(Lys) + L-lysine + ATP = L-lysyl-tRNA(Lys) + AMP + diphosphate. This chain is Lysine--tRNA ligase, found in Salmonella arizonae (strain ATCC BAA-731 / CDC346-86 / RSK2980).